The primary structure comprises 115 residues: MKMLLFLNEACIFIDSVCEGIVFWGLCLFVCAECGNAYYRGARVPYKTLFRAFEVSVFGQKEYPNFRFGPSYRFLCLSPYSICCKQPPMEEVILYYPSPDSLIKNRKRVLGVAYL.

A helical transmembrane segment spans residues 10–30 (ACIFIDSVCEGIVFWGLCLFV).

Belongs to the UPF0377 family.

The protein resides in the membrane. The protein is Putative UPF0377 protein YHL045W of Saccharomyces cerevisiae (strain ATCC 204508 / S288c) (Baker's yeast).